The following is a 217-amino-acid chain: Large ribosomal subunit protein bL25 (217 aa).

Residues 185-217 (TKETVEDEEAEEAAAEGAEETGETGETEEGGDE) are disordered. The span at 189-217 (VEDEEAEEAAAEGAEETGETGETEEGGDE) shows a compositional bias: acidic residues.

This sequence belongs to the bacterial ribosomal protein bL25 family. CTC subfamily. Part of the 50S ribosomal subunit; part of the 5S rRNA/L5/L18/L25 subcomplex. Contacts the 5S rRNA. Binds to the 5S rRNA independently of L5 and L18.

Functionally, this is one of the proteins that binds to the 5S RNA in the ribosome where it forms part of the central protuberance. The chain is Large ribosomal subunit protein bL25 from Desulfosudis oleivorans (strain DSM 6200 / JCM 39069 / Hxd3) (Desulfococcus oleovorans).